The chain runs to 190 residues: dCTP deaminase (190 aa).

113 to 118 (KSTYAR) contacts dCTP. The Proton donor/acceptor role is filled by glutamate 139. DCTP-binding residues include glutamine 158, tyrosine 172, lysine 181, and glutamine 182.

It belongs to the dCTP deaminase family. As to quaternary structure, homotrimer.

It catalyses the reaction dCTP + H2O + H(+) = dUTP + NH4(+). It participates in pyrimidine metabolism; dUMP biosynthesis; dUMP from dCTP (dUTP route): step 1/2. Functionally, catalyzes the deamination of dCTP to dUTP. The polypeptide is dCTP deaminase (Chlamydia felis (strain Fe/C-56) (Chlamydophila felis)).